We begin with the raw amino-acid sequence, 456 residues long: MKQKWIVLIIICIGVFMSTLDGSILNIANPTIAADFKINMSQIQWVVTAYMLVVTATMLFFGKLGDKVGSNRLYTLGFFIFTIGSFLCSMSNNLSTLISSRIFQAVGASILMATGLGIVSNAFPANEKGKAIGITGAVVGIGNMSGPVIGGIILEHFGWPSIFIINIPIGIIAVFLGIKFLPKPVLDEQNKSFDIPGLLLFASCTTLILLAMNEKGNTRLYLGITALIIFLLLALREVKFEQSFIDLPLFKNRNFTVGNIIGVACYFPQMAVSFLLPFYLEQLKNLSPMMAGYVMTVHPLIMVLIAPIAGSLSDKHGAKNILTASFSFMTISLVGMALLKADSPLYLLIVCLVIFGLGLGAFSSPNNSSILADVPPQKQGYGGSFLATIRNLSFALGTAFFSSFFAQSLTYNQKFKSHTSAYVIASNQSYWIAASVCFIGLILTVFFMRKTDKSIS.

The next 14 membrane-spanning stretches (helical) occupy residues 5–25 (WIVL…GSIL), 45–65 (WVVT…GKLG), 78–98 (FFIF…STLI), 105–125 (AVGA…AFPA), 134–154 (ITGA…GIIL), 158–178 (GWPS…FLGI), 192–212 (SFDI…LLAM), 220–240 (LYLG…EVKF), 260–280 (IIGV…PFYL), 289–309 (MMAG…APIA), 321–341 (ILTA…LLKA), 343–363 (SPLY…GAFS), 385–405 (FLAT…SSFF), and 428–448 (QSYW…VFFM).

This sequence belongs to the major facilitator superfamily.

The protein localises to the cell membrane. Functionally, transports riboflavin into the cell. This chain is Riboflavin transporter RibZ, found in Clostridioides difficile (strain 630) (Peptoclostridium difficile).